The primary structure comprises 417 residues: Spermidine/putrescine import ATP-binding protein PotA (417 aa).

One can recognise an ABC transporter domain in the interval 5-308; the sequence is IILKDLTKVF…PANRFVAQFV (304 aa). An ATP-binding site is contributed by 37-44; that stretch reads GPSGCGKT. The interval 105-177 is insert; that stretch reads DFNSKIKDNL…TALKCKKINK (73 aa).

The protein belongs to the ABC transporter superfamily. Spermidine/putrescine importer (TC 3.A.1.11.1) family. As to quaternary structure, the complex is composed of two ATP-binding proteins (PotA), two transmembrane proteins (PotB and PotC) and a solute-binding protein (PotD).

It is found in the cell membrane. The enzyme catalyses ATP + H2O + polyamine-[polyamine-binding protein]Side 1 = ADP + phosphate + polyamineSide 2 + [polyamine-binding protein]Side 1.. Part of the ABC transporter complex PotABCD involved in spermidine/putrescine import. Responsible for energy coupling to the transport system. The polypeptide is Spermidine/putrescine import ATP-binding protein PotA (Aster yellows witches'-broom phytoplasma (strain AYWB)).